Consider the following 208-residue polypeptide: Uracil phosphoribosyltransferase (208 aa).

5-phospho-alpha-D-ribose 1-diphosphate is bound by residues Arg78, Arg103, and 130–138 (DPMFATGGT). Uracil is bound by residues Ile193 and 198–200 (GDA). 5-phospho-alpha-D-ribose 1-diphosphate is bound at residue Asp199.

This sequence belongs to the UPRTase family. Mg(2+) serves as cofactor.

It carries out the reaction UMP + diphosphate = 5-phospho-alpha-D-ribose 1-diphosphate + uracil. It participates in pyrimidine metabolism; UMP biosynthesis via salvage pathway; UMP from uracil: step 1/1. With respect to regulation, allosterically activated by GTP. Functionally, catalyzes the conversion of uracil and 5-phospho-alpha-D-ribose 1-diphosphate (PRPP) to UMP and diphosphate. The polypeptide is Uracil phosphoribosyltransferase (Campylobacter curvus (strain 525.92)).